The chain runs to 409 residues: Putative lipoate-protein ligase A (409 aa).

One can recognise a BPL/LPL catalytic domain in the interval 146–330 (GPDNCRLLFY…RFQKTFKVDG (185 aa)). Residues R188, 193–196 (GTVL), and K249 each bind ATP. K249 is a binding site for (R)-lipoate.

Belongs to the LplA family. Monomer.

It catalyses the reaction L-lysyl-[lipoyl-carrier protein] + (R)-lipoate + ATP = N(6)-[(R)-lipoyl]-L-lysyl-[lipoyl-carrier protein] + AMP + diphosphate + H(+). It participates in protein modification; protein lipoylation via exogenous pathway; protein N(6)-(lipoyl)lysine from lipoate: step 1/2. The protein operates within protein modification; protein lipoylation via exogenous pathway; protein N(6)-(lipoyl)lysine from lipoate: step 2/2. Functionally, catalyzes both the ATP-dependent activation of exogenously supplied lipoate to lipoyl-AMP and the transfer of the activated lipoyl onto the lipoyl domains of lipoate-dependent enzymes. The chain is Putative lipoate-protein ligase A (AIM22) from Saccharomyces cerevisiae (strain RM11-1a) (Baker's yeast).